A 557-amino-acid chain; its full sequence is E3 ubiquitin-protein ligase rnf168 (557 aa).

The RING-type zinc-finger motif lies at 16–55 (CPICQEILLEPVTLPCKHTLCNPCFQMTVEKASLCCPFCR). Residues 112 to 130 (LCQPGEIRQEYEAEVSKIE) carry the LR motif 1 motif. The UMI motif signature appears at 145–153 (EDYIQKLLA). 2 consecutive short sequence motifs (MIU motif) follow at residues 170 to 193 (MEEQ…VSNA) and 422 to 445 (RRRQ…KELK). The LR motif 2 motif lies at 449–460 (RGKGSPDEYELR). The disordered stretch occupies residues 482 to 543 (PLRKEIPVQD…GINVLKPINK (62 aa)). Positions 490 to 500 (QDNSRNTQSEY) are enriched in polar residues. Basic residues predominate over residues 508 to 521 (PSRKNSVRSARVRQ).

The protein belongs to the RNF168 family. In terms of assembly, monomer.

It is found in the nucleus. The catalysed reaction is S-ubiquitinyl-[E2 ubiquitin-conjugating enzyme]-L-cysteine + [acceptor protein]-L-lysine = [E2 ubiquitin-conjugating enzyme]-L-cysteine + N(6)-ubiquitinyl-[acceptor protein]-L-lysine.. It participates in protein modification; protein ubiquitination. Its function is as follows. E3 ubiquitin-protein ligase required for accumulation of repair proteins to sites of DNA damage. Acts with ube2n/ubc13 to amplify the rnf8-dependent histone ubiquitination. Recruited to sites of DNA damage at double-strand breaks (DSBs) by binding to ubiquitinated histone H2A and ubiquitinates histone H2A and H2AX, leading to amplify the rnf8-dependent H2A ubiquitination and promoting the formation of 'Lys-63'-linked ubiquitin conjugates. This leads to concentrate ubiquitinated histones H2A and H2AX at DNA lesions to the threshold required for recruitment of tp53bp1 and brca1. Catalyzes monoubiquitination of 'Lys-13' and 'Lys-15' of nucleosomal histone H2A (H2AK13Ub and H2AK15Ub, respectively). In Xenopus laevis (African clawed frog), this protein is E3 ubiquitin-protein ligase rnf168.